A 612-amino-acid chain; its full sequence is 1,8-cineole synthase, chloroplastic (612 aa).

The transit peptide at Met1–Thr52 directs the protein to the chloroplast. The Mg(2+) site is built by Asp363, Asp367, and Asp515. The DDXXD motif motif lies at Asp363–Asp367.

Belongs to the terpene synthase family. Tpsd subfamily. Mg(2+) is required as a cofactor. The cofactor is Mn(2+).

It is found in the plastid. The protein resides in the chloroplast. It carries out the reaction (2E)-geranyl diphosphate + H2O = 1,8-cineole + diphosphate. The protein operates within terpene metabolism; oleoresin biosynthesis. Its function is as follows. Terpene synthase (TPS) involved in the biosynthesis of monoterpene natural products included in conifer oleoresin secretions and volatile emissions; these compounds contribute to biotic and abiotic stress defense against herbivores and pathogens. Catalyzes the conversion of (2E)-geranyl diphosphate (GPP) to 1,8-cineole. In Picea engelmannii x Picea glauca (Hybrid white spruce), this protein is 1,8-cineole synthase, chloroplastic.